The following is a 196-amino-acid chain: Alpha-crystallin A chain (196 aa).

Met1 carries the N-acetylmethionine modification. The required for complex formation with BFSP1 and BFSP2 stretch occupies residues 1–63 (MDVTIQHPWF…RTVLDSCISE (63 aa)). A Deamidated glutamine; partial modification is found at Gln6. Phosphoserine is present on Ser45. Gln50 carries the deamidated glutamine; partial modification. The sHSP domain occupies 76–185 (HAGNPENNPI…GHSERAIPVS (110 aa)). Lys93 and Lys122 each carry N6-acetyllysine. His123 provides a ligand contact to Zn(2+). Asn124 is subject to Deamidated asparagine; partial. Zn(2+) contacts are provided by Glu125 and His130. Position 145 is a phosphoserine (Ser145). The residue at position 170 (Gln170) is a Deamidated glutamine; partial. A disordered region spans residues 170–196 (QSGLDAGHSERAIPVSQEEKPSSAPLF). Residues 176–190 (GHSERAIPVSQEEKP) show a composition bias toward basic and acidic residues. His177 is a binding site for Zn(2+). Ser185 is a glycosylation site (O-linked (GlcNAc) serine).

It belongs to the small heat shock protein (HSP20) family. Heteromer composed of three CRYAA and one CRYAB subunits. Inter-subunit bridging via zinc ions enhances stability, which is crucial as there is no protein turn over in the lens. Can also form homodimers and homotetramers (dimers of dimers) which serve as the building blocks of homooligomers. Within homooligomers, the zinc-binding motif is created from residues of 3 different molecules. His-123 and Glu-125 from one molecule are ligands of the zinc ion, and His-130 and His-177 residues from additional molecules complete the site with tetrahedral coordination geometry. Part of a complex required for lens intermediate filament formation composed of BFSP1, BFSP2 and CRYAA. Acetylation at Lys-93 may increase chaperone activity. In terms of processing, undergoes age-dependent proteolytical cleavage at the C-terminus.

The protein localises to the cytoplasm. Its subcellular location is the nucleus. Its function is as follows. Contributes to the transparency and refractive index of the lens. Acts as a chaperone, preventing aggregation of various proteins under a wide range of stress conditions. Required for the correct formation of lens intermediate filaments as part of a complex composed of BFSP1, BFSP2 and CRYAA. In Spalax ehrenbergi (Middle East blind mole rat), this protein is Alpha-crystallin A chain (CRYAA).